We begin with the raw amino-acid sequence, 195 residues long: MDKNKEMTPTTPSLARLETFFKEKVTPNLVERFQYKNAMLVPKLKKISINIGVGAAAAEPKLLEIALQELAQITGQKPQIRKSKKAISNFKLREGQAIGCRVTLRRKAMYEFFDRFVSLAVPRIRDFRGLSDTSFDGRGNYTVGVREQIIFPEIDIDKVPRISGMDISFVTSASTDEEAYVLLSELGMPFKKKNN.

It belongs to the universal ribosomal protein uL5 family. In terms of assembly, part of the 50S ribosomal subunit; part of the 5S rRNA/L5/L18/L25 subcomplex. Contacts the 5S rRNA and the P site tRNA. Forms a bridge to the 30S subunit in the 70S ribosome.

Its function is as follows. This is one of the proteins that bind and probably mediate the attachment of the 5S RNA into the large ribosomal subunit, where it forms part of the central protuberance. In the 70S ribosome it contacts protein S13 of the 30S subunit (bridge B1b), connecting the 2 subunits; this bridge is implicated in subunit movement. Contacts the P site tRNA; the 5S rRNA and some of its associated proteins might help stabilize positioning of ribosome-bound tRNAs. This chain is Large ribosomal subunit protein uL5, found in Pelodictyon phaeoclathratiforme (strain DSM 5477 / BU-1).